The following is a 292-amino-acid chain: E3 ubiquitin-protein ligase trim-21 (292 aa).

An RING-type zinc finger spans residues 6-52; it reads CEICDDDFSSEEDGDHNPRNLKCSHTLCEGCIKKLLKNGRVVCPFCR. The B box-type zinc-finger motif lies at 90-137; sequence NFPPKCVEHPYNVAEFACIESNCSSKNKLMCQTCEEFGAHKGHAKELL. Zn(2+) contacts are provided by Cys-95, His-98, Cys-123, and His-129. The stretch at 152 to 179 forms a coiled coil; the sequence is INQLKLNIQNCTVKKNELEEAVVKSEQL.

Belongs to the TRIM/RBCC family. Interacts with E2 ubiquitin-conjugating enzyme ubc-21. Interacts with ced-6; this mediates interaction of trim-21 with ced-1 and is required for ced-1 ubiquitination. Interacts with nck-1; the interaction is required for ced-1 ubiquitination. In terms of tissue distribution, in early larva, observed mainly in pharyngeal and body wall muscle cells.

The protein resides in the cytoplasm. The enzyme catalyses S-ubiquitinyl-[E2 ubiquitin-conjugating enzyme]-L-cysteine + [acceptor protein]-L-lysine = [E2 ubiquitin-conjugating enzyme]-L-cysteine + N(6)-ubiquitinyl-[acceptor protein]-L-lysine.. It functions in the pathway protein modification; protein ubiquitination. E3 ubiquitin-protein ligase which catalyzes 'Lys-48'-linked polyubiquitination of ced-1, promoting its proteasomal degradation to maintain appropriate ced-1 levels for apoptotic cell clearance. Acts together with E2 ubiquitin-conjugating enzyme ubc-21. This Caenorhabditis elegans protein is E3 ubiquitin-protein ligase trim-21.